A 305-amino-acid polypeptide reads, in one-letter code: Insulin-like growth factor-binding protein 2 (305 aa).

The N-terminal stretch at 1–34 (MLPRLGGPALPLLLPSLLLLLLLGAGGCGPGVRA) is a signal peptide. The region spanning 36–118 (VLFRCPPCTP…VTGAGTCEKR (83 aa)) is the IGFBP N-terminal domain. Cystine bridges form between cysteine 40–cysteine 68, cysteine 43–cysteine 70, cysteine 51–cysteine 71, cysteine 59–cysteine 74, cysteine 82–cysteine 95, cysteine 89–cysteine 115, cysteine 207–cysteine 241, cysteine 252–cysteine 263, and cysteine 265–cysteine 286. In terms of domain architecture, Thyroglobulin type-1 spans 204 to 286 (RTPCQQELDQ…APTIRGDPEC (83 aa)). Positions 281-283 (RGD) match the Cell attachment site motif.

As to quaternary structure, interacts with IGF1. Interacts with IGF2. Interacts (via RGD motif) with integrin alpha5/ITGA5; this interaction induces cell migration, adhesion or apoptosis according to the context. Interacts with PTPRB; this interaction leads to PTPRB dimerization and inactivation. In terms of processing, cleaved by MMP9 leading to release of free IGF2 from IGFBP2-IGF2 complex, which contributes to enhance the motility and the growth of astrocytes. Post-translationally, O-glycosylated. Highly expressed in adult liver, but also in kidney, lung, brain, spleen, testis and ovary.

It is found in the secreted. Functionally, multifunctional protein that plays a critical role in regulating the availability of IGFs such as IGF1 and IGF2 to their receptors and thereby regulates IGF-mediated cellular processes including proliferation, differentiation, and apoptosis in a cell-type specific manner. Functions coordinately with receptor protein tyrosine phosphatase beta/PTPRB and the IGF1 receptor to regulate IGF1-mediated signaling by stimulating the phosphorylation of PTEN leading to its inactivation and AKT1 activation. Plays a positive role in cell migration via interaction with integrin alpha5/ITGA5 through an RGD motif. Additionally, interaction with ITGA5/ITGB1 enhances the adhesion of endothelial progenitor cells to endothelial cells. Upon mitochondrial damage, facilitates apoptosis with ITGA5 of podocytes, and then activates the phosphorylation of focal adhesion kinase (FAK)-mediated mitochondrial injury. The polypeptide is Insulin-like growth factor-binding protein 2 (Igfbp2) (Mus musculus (Mouse)).